A 141-amino-acid polypeptide reads, in one-letter code: Large ribosomal subunit protein uL11 (141 aa).

The protein belongs to the universal ribosomal protein uL11 family. Part of the ribosomal stalk of the 50S ribosomal subunit. Interacts with L10 and the large rRNA to form the base of the stalk. L10 forms an elongated spine to which L12 dimers bind in a sequential fashion forming a multimeric L10(L12)X complex. In terms of processing, one or more lysine residues are methylated.

Functionally, forms part of the ribosomal stalk which helps the ribosome interact with GTP-bound translation factors. The sequence is that of Large ribosomal subunit protein uL11 from Acetivibrio thermocellus (strain ATCC 27405 / DSM 1237 / JCM 9322 / NBRC 103400 / NCIMB 10682 / NRRL B-4536 / VPI 7372) (Clostridium thermocellum).